Consider the following 6713-residue polypeptide: Extracellular matrix-binding protein EbhA (6713 aa).

FIVAR domains follow at residues Met-1 to Ala-58, Ala-126 to Ala-184, Ala-252 to Ala-310, Gln-378 to Ala-436, Ala-504 to Ala-562, Ala-630 to Ile-688, Ala-756 to Ala-814, Ala-882 to Ala-940, Ala-1008 to Met-1066, Ala-1134 to Ala-1192, Ala-1260 to Ala-1318, Ala-1386 to Ala-1444, Ala-1512 to Ala-1570, Ala-1638 to Ala-1696, Ala-1764 to Ala-1822, Ala-1890 to Ala-1948, Ala-2142 to Lys-2200, Ala-2268 to Ala-2325, Ala-2393 to Ala-2451, Ala-2519 to Ala-2577, Ala-2645 to Ala-2703, Ala-2771 to Ala-2829, Ala-2897 to Ala-2955, Ala-3023 to Ala-3081, Ala-3149 to Ala-3207, Ala-3275 to Ala-3333, Ala-3401 to Ala-3459, Ala-3527 to Ala-3585, Ala-3653 to Ala-3711, Ala-3779 to Ala-3837, Ala-3905 to Ala-3963, Ala-4031 to Ala-4089, Ala-4157 to Glu-4218, Ala-4283 to Ala-4341, Ala-4409 to Ala-4467, Ala-4535 to Val-4592, Leu-4660 to Ala-4718, Ala-4786 to Ala-4844, Ala-4912 to Leu-4970, Ala-5038 to Leu-5096, Ala-5164 to Ala-5222, Ser-5290 to Ala-5344, Ala-5412 to Leu-5471, and Ala-5666 to Ala-5722. Residues Val-6518–Ala-6540 traverse the membrane as a helical segment. The tract at residues Arg-6616–Lys-6713 is disordered. Basic and acidic residues-rich tracts occupy residues Thr-6631–His-6641 and Gln-6680–Ser-6690. Over residues Thr-6695–Lys-6713 the composition is skewed to basic residues.

It is found in the cell membrane. The protein is Extracellular matrix-binding protein EbhA (ebhA) of Staphylococcus aureus (strain Mu3 / ATCC 700698).